A 259-amino-acid polypeptide reads, in one-letter code: 3'-5' ssDNA/RNA exonuclease TatD (259 aa).

Glu92, His128, and His153 together coordinate a divalent metal cation.

Belongs to the metallo-dependent hydrolases superfamily. TatD-type hydrolase family. TatD subfamily. Monomer. Mg(2+) serves as cofactor.

It localises to the cytoplasm. 3'-5' exonuclease that prefers single-stranded DNA and RNA. May play a role in the H(2)O(2)-induced DNA damage repair. This chain is 3'-5' ssDNA/RNA exonuclease TatD, found in Erwinia tasmaniensis (strain DSM 17950 / CFBP 7177 / CIP 109463 / NCPPB 4357 / Et1/99).